A 498-amino-acid polypeptide reads, in one-letter code: Protein spinster homolog 3 (498 aa).

Transmembrane regions (helical) follow at residues 49 to 71 (IAVAVLCYINLLNYMDRYTIAGV), 87 to 107 (GLLQTVFICSFMFLAPVFGYL), 114 to 134 (KLIMIVGLVMWIVTTLGSSFV), 148 to 168 (LVGTGEASYSTIAPTIIGDLF), 175 to 195 (LMISFFYIFIPVGSGLGYIIG), 207 to 227 (WALRVSPALGGLGLLLLVFLI), 260 to 280 (FVWSSLGVTAMAFVTGALAFW), 309 to 329 (YIFGAITVVTGVVGVFLGTCI), 343 to 363 (LICAVGMLSSSPCFFIAIVLA), 373 to 393 (FIAIGETLLSLNWAILADILL), 407 to 427 (LQIMVCHLLGDAGSPYLIGAI), and 451 to 471 (LLCPFIGVLGGLFFLMTSLYI).

Belongs to the major facilitator superfamily. Spinster (TC 2.A.1.49) family.

The protein localises to the membrane. Its function is as follows. Sphingolipid transporter. This Danio rerio (Zebrafish) protein is Protein spinster homolog 3 (spns3).